We begin with the raw amino-acid sequence, 124 residues long: Acidic phospholipase A2 (124 aa).

7 disulfide bridges follow: cysteine 26-cysteine 116, cysteine 28-cysteine 44, cysteine 43-cysteine 95, cysteine 49-cysteine 124, cysteine 50-cysteine 88, cysteine 57-cysteine 81, and cysteine 75-cysteine 86. Positions 27, 29, and 31 each coordinate Ca(2+). The active site involves histidine 47. Aspartate 48 lines the Ca(2+) pocket. Aspartate 89 is an active-site residue.

This sequence belongs to the phospholipase A2 family. Group II subfamily. D49 sub-subfamily. In terms of assembly, monomer. It depends on Ca(2+) as a cofactor. Expressed by the venom gland.

Its subcellular location is the secreted. It carries out the reaction a 1,2-diacyl-sn-glycero-3-phosphocholine + H2O = a 1-acyl-sn-glycero-3-phosphocholine + a fatty acid + H(+). Functionally, snake venom phospholipase A2 (PLA2) that acts in vivo as an anti-thrombotic agent. Inhibits platelet aggregation induced by ADP, arachidonic acid, and thrombin. PLA2 catalyzes the calcium-dependent hydrolysis of the 2-acyl groups in 3-sn-phosphoglycerides. This Gloydius halys (Chinese water mocassin) protein is Acidic phospholipase A2.